We begin with the raw amino-acid sequence, 175 residues long: Chorismate pyruvate-lyase (175 aa).

Substrate contacts are provided by M36, R78, L116, and E157.

The protein belongs to the UbiC family. In terms of assembly, monomer.

The protein localises to the cytoplasm. It catalyses the reaction chorismate = 4-hydroxybenzoate + pyruvate. It functions in the pathway cofactor biosynthesis; ubiquinone biosynthesis. Its function is as follows. Removes the pyruvyl group from chorismate, with concomitant aromatization of the ring, to provide 4-hydroxybenzoate (4HB) for the ubiquinone pathway. The sequence is that of Chorismate pyruvate-lyase from Hamiltonella defensa subsp. Acyrthosiphon pisum (strain 5AT).